The following is a 155-amino-acid chain: Large ribosomal subunit protein uL22c (155 aa).

It belongs to the universal ribosomal protein uL22 family. As to quaternary structure, part of the 50S ribosomal subunit.

Its subcellular location is the plastid. It localises to the chloroplast. Functionally, this protein binds specifically to 23S rRNA. The globular domain of the protein is located near the polypeptide exit tunnel on the outside of the subunit, while an extended beta-hairpin is found that lines the wall of the exit tunnel in the center of the 70S ribosome. The sequence is that of Large ribosomal subunit protein uL22c (rpl22) from Solanum bulbocastanum (Wild potato).